The chain runs to 294 residues: Ribosomal RNA small subunit methyltransferase A (294 aa).

S-adenosyl-L-methionine is bound by residues Asn-31, Leu-33, Gly-58, Glu-79, Asp-111, and Asn-136.

It belongs to the class I-like SAM-binding methyltransferase superfamily. rRNA adenine N(6)-methyltransferase family. RsmA subfamily.

It is found in the cytoplasm. The catalysed reaction is adenosine(1518)/adenosine(1519) in 16S rRNA + 4 S-adenosyl-L-methionine = N(6)-dimethyladenosine(1518)/N(6)-dimethyladenosine(1519) in 16S rRNA + 4 S-adenosyl-L-homocysteine + 4 H(+). Functionally, specifically dimethylates two adjacent adenosines (A1518 and A1519) in the loop of a conserved hairpin near the 3'-end of 16S rRNA in the 30S particle. May play a critical role in biogenesis of 30S subunits. This is Ribosomal RNA small subunit methyltransferase A from Lactobacillus helveticus (strain DPC 4571).